We begin with the raw amino-acid sequence, 399 residues long: Ubiquitin-like modifier-activating enzyme 5 (399 aa).

Residues glycine 76, aspartate 97, lysine 120, asparagine 143, and asparagine 177 each contribute to the ATP site. Zn(2+)-binding residues include cysteine 219 and cysteine 222. Cysteine 243 (glycyl thioester intermediate) is an active-site residue. Zn(2+) contacts are provided by cysteine 296 and cysteine 301.

It belongs to the ubiquitin-activating E1 family. UBA5 subfamily.

Its function is as follows. E1-like enzyme which activates UFM1. This is Ubiquitin-like modifier-activating enzyme 5 from Drosophila mojavensis (Fruit fly).